Reading from the N-terminus, the 114-residue chain is Mediator of RNA polymerase II transcription subunit 11 (114 aa).

Residues 28–61 are a coiled coil; sequence LELSKEKANASLLDRQLNQFQTSINRVESELSSQ.

This sequence belongs to the Mediator complex subunit 11 family. Component of the Mediator complex. As to expression, ubiquitously expressed at early stage of development. After fertilization expressed in head region as well as in lateral line primordium.

The protein localises to the nucleus. Functionally, component of the Mediator complex, a coactivator involved in the regulated transcription of nearly all RNA polymerase II-dependent genes. Mediator functions as a bridge to convey information from gene-specific regulatory proteins to the basal RNA polymerase II transcription machinery. Mediator is recruited to promoters by direct interactions with regulatory proteins and serves as a scaffold for the assembly of a functional pre-initiation complex with RNA polymerase II and the general transcription factors. This is Mediator of RNA polymerase II transcription subunit 11 (med11) from Danio rerio (Zebrafish).